The chain runs to 316 residues: Apolipoprotein E (316 aa).

The signal sequence occupies residues 1–18 (MKVLWVALVVALLAGCQA). 8 consecutive repeat copies span residues 79–100 (VLMEETMKEVKAYREELEGQLA), 101–122 (PMAQETQARVSKELQAAQARLG), 123–144 (SDMEDLRNRLAQYRSEVQAMLG), 145–166 (QSTEELRARMASHLRKLRKRLL), 167–188 (RDADDLKKRLAVYQAGASEGAE), 189–210 (RSVSAIRERLRPLVEQSQSRAA), 211–232 (TLSTQVGQPLLDRAEAWRQKLH), and 233–254 (GRLEEVGVRAQDRLDKMRQQLE). An 8 X 22 AA approximate tandem repeats region spans residues 79–254 (VLMEETMKEV…RLDKMRQQLE (176 aa)). Methionine 142 carries the methionine sulfoxide modification. A Phosphoserine modification is found at serine 146. Positions 157–167 (HLRKLRKRLLR) are LDL and other lipoprotein receptors binding. 161–164 (LRKR) serves as a coordination point for heparin. The interval 209 to 289 (AATLSTQVGQ…SWFEPLVEDM (81 aa)) is lipid-binding and lipoprotein association. Threonine 211 is a glycosylation site (O-linked (GalNAc...) threonine). A heparin-binding site is contributed by 228-235 (RQKLHGRL). The interval 265–316 (SQIRLQAEAFQARLRSWFEPLVEDMQRQWAGLVEKVQLALHLSPTSPPSENH) is homooligomerization. The specificity for association with VLDL stretch occupies residues 277 to 289 (RLRSWFEPLVEDM).

Belongs to the apolipoprotein A1/A4/E family. In terms of assembly, homotetramer. May interact with ABCA1; functionally associated with ABCA1 in the biogenesis of HDLs. May interact with APP/A4 amyloid-beta peptide; the interaction is extremely stable in vitro but its physiological significance is unclear. May interact with MAPT. May interact with MAP2. In the cerebrospinal fluid, interacts with secreted SORL1. Interacts with PMEL; this allows the loading of PMEL luminal fragment on ILVs to induce fibril nucleation. In terms of processing, APOE exists as multiple glycosylated and sialylated glycoforms within cells and in plasma. The extent of glycosylation and sialylation are tissue and context specific. Post-translationally, glycated in plasma VLDL. Phosphorylated by FAM20C in the extracellular medium.

It localises to the secreted. The protein resides in the extracellular space. Its subcellular location is the extracellular matrix. The protein localises to the extracellular vesicle. It is found in the endosome. It localises to the multivesicular body. Functionally, APOE is an apolipoprotein, a protein associating with lipid particles, that mainly functions in lipoprotein-mediated lipid transport between organs via the plasma and interstitial fluids. APOE is a core component of plasma lipoproteins and is involved in their production, conversion and clearance. Apolipoproteins are amphipathic molecules that interact both with lipids of the lipoprotein particle core and the aqueous environment of the plasma. As such, APOE associates with chylomicrons, chylomicron remnants, very low density lipoproteins (VLDL) and intermediate density lipoproteins (IDL) but shows a preferential binding to high-density lipoproteins (HDL). It also binds a wide range of cellular receptors including the LDL receptor/LDLR and the very low-density lipoprotein receptor/VLDLR that mediate the cellular uptake of the APOE-containing lipoprotein particles. Finally, APOE also has a heparin-binding activity and binds heparan-sulfate proteoglycans on the surface of cells, a property that supports the capture and the receptor-mediated uptake of APOE-containing lipoproteins by cells. The sequence is that of Apolipoprotein E (APOE) from Ovis aries musimon (Mouflon).